A 142-amino-acid chain; its full sequence is Large ribosomal subunit protein uL13 (142 aa).

Belongs to the universal ribosomal protein uL13 family. Part of the 50S ribosomal subunit.

In terms of biological role, this protein is one of the early assembly proteins of the 50S ribosomal subunit, although it is not seen to bind rRNA by itself. It is important during the early stages of 50S assembly. In Syntrophus aciditrophicus (strain SB), this protein is Large ribosomal subunit protein uL13.